Reading from the N-terminus, the 483-residue chain is Iroquois-class homeodomain protein IRX-5 (483 aa).

The segment at residues 113-175 (DPAYRKNATR…NARRRLKKEN (63 aa)) is a DNA-binding region (homeobox; TALE-type). 2 disordered regions span residues 177 to 392 (MTWT…QCPF) and 423 to 442 (GHPGPGPGPTTGPGSHFNGL). A compositionally biased stretch (acidic residues) spans 186 to 203 (EDEEEEENIDLEKNDEDE). Composition is skewed to basic and acidic residues over residues 204 to 213 (PQKPEDKGDP) and 250 to 261 (SDFKEPPSEGRL). Low complexity-rich tracts occupy residues 266 to 282 (GPPRTGGPSPAGPAAAR) and 374 to 388 (SRASPAPAPSRSPSA). S274 carries the post-translational modification Phosphoserine. At S464 the chain carries Phosphoserine.

It belongs to the TALE/IRO homeobox family.

The protein localises to the nucleus. Functionally, establishes the cardiac repolarization gradient by its repressive actions on the KCND2 potassium-channel gene. Required for retinal cone bipolar cell differentiation. May regulate contrast adaptation in the retina and control specific aspects of visual function in circuits of the mammalian retina. Could be involved in the regulation of both the cell cycle and apoptosis in prostate cancer cells. Involved in craniofacial and gonadal development. Modulates the migration of progenitor cell populations in branchial arches and gonads by repressing CXCL12. This Homo sapiens (Human) protein is Iroquois-class homeodomain protein IRX-5 (IRX5).